Consider the following 878-residue polypeptide: Protein translocase subunit SecA (878 aa).

ATP contacts are provided by residues glutamine 81, 99–103, and aspartate 489; that span reads GEGKT.

The protein belongs to the SecA family.

It is found in the plastid. The protein localises to the chloroplast stroma. Its subcellular location is the chloroplast thylakoid membrane. It carries out the reaction ATP + H2O + cellular proteinSide 1 = ADP + phosphate + cellular proteinSide 2.. Its function is as follows. Has a central role in coupling the hydrolysis of ATP to the transfer of proteins across the thylakoid membrane. This chain is Protein translocase subunit SecA, found in Thalassiosira pseudonana (Marine diatom).